A 160-amino-acid polypeptide reads, in one-letter code: MLQIKIVAVGKIRERFLMEGIKEYAKRLSAYIRLEMTEIADEPCPERLSAADEERVKDREGERLLKGIGPQEHVILLDLQGKEFTSPDFSEYMDDLALMGKSSVTFIIGGSLGVSGEVRKRADYRWSFSRLTFPHPLMRLMLLEQIYRAMRISKGEPYHK.

S-adenosyl-L-methionine is bound by residues L77, G109, and 128–133 (FSRLTF).

Belongs to the RNA methyltransferase RlmH family. Homodimer.

It is found in the cytoplasm. The catalysed reaction is pseudouridine(1915) in 23S rRNA + S-adenosyl-L-methionine = N(3)-methylpseudouridine(1915) in 23S rRNA + S-adenosyl-L-homocysteine + H(+). Functionally, specifically methylates the pseudouridine at position 1915 (m3Psi1915) in 23S rRNA. This is Ribosomal RNA large subunit methyltransferase H from Desulfitobacterium hafniense (strain Y51).